The chain runs to 475 residues: ATP synthase subunit beta, chloroplastic (475 aa).

Residue 156 to 163 participates in ATP binding; sequence GGAGVGKT.

Belongs to the ATPase alpha/beta chains family. F-type ATPases have 2 components, CF(1) - the catalytic core - and CF(0) - the membrane proton channel. CF(1) has five subunits: alpha(3), beta(3), gamma(1), delta(1), epsilon(1). CF(0) has four main subunits: a(1), b(1), b'(1) and c(9-12).

Its subcellular location is the plastid. The protein resides in the chloroplast thylakoid membrane. It catalyses the reaction ATP + H2O + 4 H(+)(in) = ADP + phosphate + 5 H(+)(out). In terms of biological role, produces ATP from ADP in the presence of a proton gradient across the membrane. The catalytic sites are hosted primarily by the beta subunits. This is ATP synthase subunit beta, chloroplastic from Trieres chinensis (Marine centric diatom).